The following is a 147-amino-acid chain: NADPH-dependent 7-cyano-7-deazaguanine reductase (147 aa).

Positions 1 to 23 (MQTTHLGKNSPIPQSPEEASLDY) are disordered. The Thioimide intermediate role is filled by cysteine 46. Aspartate 53 serves as the catalytic Proton donor. Substrate contacts are provided by residues 68–70 (VES) and 87–88 (HE).

It belongs to the GTP cyclohydrolase I family. QueF type 1 subfamily.

Its subcellular location is the cytoplasm. It carries out the reaction 7-aminomethyl-7-carbaguanine + 2 NADP(+) = 7-cyano-7-deazaguanine + 2 NADPH + 3 H(+). It functions in the pathway tRNA modification; tRNA-queuosine biosynthesis. Its function is as follows. Catalyzes the NADPH-dependent reduction of 7-cyano-7-deazaguanine (preQ0) to 7-aminomethyl-7-deazaguanine (preQ1). The protein is NADPH-dependent 7-cyano-7-deazaguanine reductase of Zymomonas mobilis subsp. mobilis (strain ATCC 31821 / ZM4 / CP4).